The primary structure comprises 334 residues: Nucleoid-associated protein ESA_01050 (334 aa).

Belongs to the YejK family.

Its subcellular location is the cytoplasm. The protein resides in the nucleoid. This Cronobacter sakazakii (strain ATCC BAA-894) (Enterobacter sakazakii) protein is Nucleoid-associated protein ESA_01050.